The primary structure comprises 266 residues: Dolichol-phosphate mannosyltransferase subunit 1 (266 aa).

Residues 1–19 (MASPGASRGASAATAAAAS) are compositionally biased toward low complexity. Residues 1 to 31 (MASPGASRGASAATAAAASPRPPQGRSSRRD) form a disordered region. Position 2 is an N-acetylalanine (A2). S3 is modified (phosphoserine). GDP-alpha-D-mannose-binding residues include P38, Y40, E42, I69, D71, D124, A125, D126, R153, R240, and K246. D126 lines the Mg(2+) pocket. D126 provides a ligand contact to Mn(2+).

Belongs to the glycosyltransferase 2 family. In terms of assembly, component of the dolichol-phosphate mannose (DPM) synthase complex composed of DPM1, DPM2 and DPM3; within the complex, directly interacts with DPM3. This interaction may stabilize DPM1. Mg(2+) serves as cofactor. The cofactor is Mn(2+). Ca(2+) is required as a cofactor.

Its subcellular location is the endoplasmic reticulum. The catalysed reaction is a di-trans,poly-cis-dolichyl phosphate + GDP-alpha-D-mannose = a di-trans,poly-cis-dolichyl beta-D-mannosyl phosphate + GDP. Its pathway is protein modification; protein glycosylation. In terms of biological role, transfers mannose from GDP-mannose to dolichol monophosphate to form dolichol phosphate mannose (Dol-P-Man) which is the mannosyl donor in pathways leading to N-glycosylation, glycosyl phosphatidylinositol membrane anchoring, and O-mannosylation of proteins; catalytic subunit of the dolichol-phosphate mannose (DPM) synthase complex. This chain is Dolichol-phosphate mannosyltransferase subunit 1 (DPM1), found in Cricetulus griseus (Chinese hamster).